We begin with the raw amino-acid sequence, 234 residues long: Probable Ufm1-specific protease 1 (234 aa).

Residues Cys70, Asp194, and His196 contribute to the active site.

Belongs to the peptidase C78 family.

In terms of biological role, thiol protease which recognizes and hydrolyzes the peptide bond at the C-terminal Gly of UFM1, a ubiquitin-like modifier protein bound to a number of target proteins. This chain is Probable Ufm1-specific protease 1, found in Drosophila melanogaster (Fruit fly).